The primary structure comprises 85 residues: Large ribosomal subunit protein bL27 (85 aa).

The segment at 1 to 21 is disordered; sequence MAHKKAGGSTRNGRDSRGKRL.

The protein belongs to the bacterial ribosomal protein bL27 family.

This chain is Large ribosomal subunit protein bL27, found in Blochmanniella floridana.